The following is a 589-amino-acid chain: PTS system mannitol-specific EIICB component (589 aa).

At 1 to 25 (MEEKVSLKVRVQKLGTSLSNMVMPN) the chain is on the cytoplasmic side. The region spanning 14–347 (LGTSLSNMVM…LHADKSTEDS (334 aa)) is the PTS EIIC type-2 domain. Residues 26 to 47 (IGAFIAWGVLTALFIADGYLPN) traverse the membrane as a helical segment. Topologically, residues 48-51 (EQLA) are extracellular. The helical transmembrane segment at 52-72 (TVVGPMLTYLLPILIGYTGGY) threads the bilayer. Residues 73-135 (MIHGQRGAVV…PGFEMLVNNF (63 aa)) lie on the Cytoplasmic side of the membrane. The helical transmembrane segment at 136 to 157 (SAGLVGFALLLLAFYAIGPVVS) threads the bilayer. The Extracellular portion of the chain corresponds to 158 to 166 (TLTGAVGNG). The chain crosses the membrane as a helical span at residues 167–187 (VEAIVNARLLPMANIIIEPAK). Over 188 to 274 (VLFLNNALNH…VMMKPTLFLA (87 aa)) the chain is Cytoplasmic. A helical transmembrane segment spans residues 275–294 (AMAGGISGTFTFQLLDAGLK). At 295–316 (SPASPGSIIAIMATAPKGVWPH) the chain is on the extracellular side. Residues 317–338 (LNILLGVLVAAVVSFLIAALIL) traverse the membrane as a helical segment. Over 339-589 (HADKSTEDSL…YDKMAARMYK (251 aa)) the chain is Cytoplasmic. The PTS EIIB type-2 domain occupies 381–476 (EKIIFACDAG…SLTGASPIAE (96 aa)). The Phosphocysteine intermediate; for EIIB activity role is filled by Cys387. Phosphocysteine; by EIIA is present on Cys387.

Homodimer.

Its subcellular location is the cell membrane. The catalysed reaction is D-mannitol(out) + N(pros)-phospho-L-histidyl-[protein] = D-mannitol 1-phosphate(in) + L-histidyl-[protein]. The phosphoenolpyruvate-dependent sugar phosphotransferase system (sugar PTS), a major carbohydrate active transport system, catalyzes the phosphorylation of incoming sugar substrates concomitantly with their translocation across the cell membrane. The enzyme II CmtAB PTS system is involved in D-mannitol transport. This Streptococcus pneumoniae (strain ATCC BAA-255 / R6) protein is PTS system mannitol-specific EIICB component (mtlA).